A 230-amino-acid chain; its full sequence is MGCQEAFRTTLLEPFSLKKDEAAKVKSFKDSVSYIEEALGVYFTEVEKQWKLFNTEKSWSPVGLEDAKLPKEAYRFKLTWILKRIFKLRCLQVFLYYFLIVYTSGNVDLISRFLFPVVMFFIMTRDFQNMGMIVLSVKMEHKMQFLSTIINEQESGANGWDEIAKKMNRYLFEKKVWNNEEFFYDGLDCEWFFSCFFYRLLSLKKTMWFASLNVELWPYVKEAQSVVTSL.

A helical membrane pass occupies residues 93–115; it reads VFLYYFLIVYTSGNVDLISRFLF.

This sequence belongs to the DUP/COS family.

The protein localises to the membrane. This is an uncharacterized protein from Saccharomyces cerevisiae (strain ATCC 204508 / S288c) (Baker's yeast).